The chain runs to 94 residues: Integration host factor subunit beta (94 aa).

The protein belongs to the bacterial histone-like protein family. Heterodimer of an alpha and a beta chain.

This protein is one of the two subunits of integration host factor, a specific DNA-binding protein that functions in genetic recombination as well as in transcriptional and translational control. The sequence is that of Integration host factor subunit beta from Salmonella arizonae (strain ATCC BAA-731 / CDC346-86 / RSK2980).